Reading from the N-terminus, the 301-residue chain is uncharacterized protein (301 aa).

An N-terminal signal peptide occupies residues 1 to 26; sequence MKGFSCSRPGYLTGLLLLAVAPILTA. The N-palmitoyl cysteine moiety is linked to residue C27. C27 is lipidated: S-diacylglycerol cysteine. Positions 46-243 constitute a TNase-like domain; the sequence is KLKPATIEYW…YNAKINIWSH (198 aa). Residues 64–136 are disordered; sequence NYASEERRKE…SKGDSTGDEK (73 aa). Composition is skewed to basic and acidic residues over residues 67-95 and 120-136; these read SEER…KTED and TPEK…GDEK.

It is found in the cell membrane. This is an uncharacterized protein from Mycoplasma pneumoniae (strain ATCC 29342 / M129 / Subtype 1) (Mycoplasmoides pneumoniae).